The primary structure comprises 488 residues: UDP-N-acetylmuramate--L-alanine ligase (488 aa).

122–128 is an ATP binding site; sequence GTHGKTT.

Belongs to the MurCDEF family.

It is found in the cytoplasm. It catalyses the reaction UDP-N-acetyl-alpha-D-muramate + L-alanine + ATP = UDP-N-acetyl-alpha-D-muramoyl-L-alanine + ADP + phosphate + H(+). It functions in the pathway cell wall biogenesis; peptidoglycan biosynthesis. In terms of biological role, cell wall formation. In Mycobacterium marinum (strain ATCC BAA-535 / M), this protein is UDP-N-acetylmuramate--L-alanine ligase.